The sequence spans 106 residues: uncharacterized protein (106 aa).

This is an uncharacterized protein from Methanocaldococcus jannaschii (strain ATCC 43067 / DSM 2661 / JAL-1 / JCM 10045 / NBRC 100440) (Methanococcus jannaschii).